The primary structure comprises 293 residues: Pyridoxal 5'-phosphate synthase subunit PdxS (293 aa).

Aspartate 23 provides a ligand contact to D-ribose 5-phosphate. Lysine 80 functions as the Schiff-base intermediate with D-ribose 5-phosphate in the catalytic mechanism. A D-ribose 5-phosphate-binding site is contributed by glycine 152. Arginine 164 lines the D-glyceraldehyde 3-phosphate pocket. D-ribose 5-phosphate contacts are provided by residues glycine 213 and 234-235; that span reads GS.

Belongs to the PdxS/SNZ family. In the presence of PdxT, forms a dodecamer of heterodimers.

It catalyses the reaction aldehydo-D-ribose 5-phosphate + D-glyceraldehyde 3-phosphate + L-glutamine = pyridoxal 5'-phosphate + L-glutamate + phosphate + 3 H2O + H(+). It functions in the pathway cofactor biosynthesis; pyridoxal 5'-phosphate biosynthesis. Functionally, catalyzes the formation of pyridoxal 5'-phosphate from ribose 5-phosphate (RBP), glyceraldehyde 3-phosphate (G3P) and ammonia. The ammonia is provided by the PdxT subunit. Can also use ribulose 5-phosphate and dihydroxyacetone phosphate as substrates, resulting from enzyme-catalyzed isomerization of RBP and G3P, respectively. In Thermus thermophilus (strain ATCC BAA-163 / DSM 7039 / HB27), this protein is Pyridoxal 5'-phosphate synthase subunit PdxS.